The sequence spans 75 residues: Small ribosomal subunit protein bS18 (75 aa).

Belongs to the bacterial ribosomal protein bS18 family. Part of the 30S ribosomal subunit. Forms a tight heterodimer with protein bS6.

Its function is as follows. Binds as a heterodimer with protein bS6 to the central domain of the 16S rRNA, where it helps stabilize the platform of the 30S subunit. This chain is Small ribosomal subunit protein bS18, found in Roseobacter denitrificans (strain ATCC 33942 / OCh 114) (Erythrobacter sp. (strain OCh 114)).